Reading from the N-terminus, the 167-residue chain is Arginine repressor (167 aa).

The protein belongs to the ArgR family.

Its subcellular location is the cytoplasm. It functions in the pathway amino-acid biosynthesis; L-arginine biosynthesis [regulation]. Regulates arginine biosynthesis genes. This Mycobacterium leprae (strain Br4923) protein is Arginine repressor.